A 338-amino-acid chain; its full sequence is Citramalyl-CoA lyase, mitochondrial (338 aa).

A mitochondrion-targeting transit peptide spans methionine 1–lysine 20. Residues tyrosine 48, lysine 55, and lysine 59 each contribute to the substrate site. An N6-acetyllysine mark is found at lysine 55, lysine 59, and lysine 64. Residues lysine 80 and lysine 90 each carry the N6-acetyllysine; alternate modification. Residues lysine 80 and lysine 90 each carry the N6-succinyllysine; alternate modification. Arginine 105 lines the substrate pocket. Mg(2+) contacts are provided by glutamate 169 and aspartate 204. Isoleucine 270–histidine 271 serves as a coordination point for substrate. N6-succinyllysine is present on lysine 307. Aspartate 318 is a catalytic residue.

Belongs to the HpcH/HpaI aldolase family. Citrate lyase beta subunit-like subfamily. In terms of assembly, homotrimer. It depends on Mg(2+) as a cofactor. In terms of tissue distribution, detected in brown fat, brain, liver, kidney, heart, skeletal muscle and ovary (at protein level).

The protein localises to the mitochondrion. It carries out the reaction glyoxylate + acetyl-CoA + H2O = (S)-malate + CoA + H(+). It catalyses the reaction propanoyl-CoA + glyoxylate + H2O = 3-methylmalate + CoA + H(+). The catalysed reaction is (3S)-citramalyl-CoA = pyruvate + acetyl-CoA. The enzyme catalyses (S)-malyl-CoA + H2O = (S)-malate + CoA + H(+). In terms of biological role, mitochondrial citramalyl-CoA lyase indirectly involved in the vitamin B12 metabolism. Converts citramalyl-CoA into acetyl-CoA and pyruvate in the C5-dicarboxylate catabolism pathway. The C5-dicarboxylate catabolism pathway is required to detoxify itaconate, a vitamin B12-poisoning metabolite. Also acts as a malate synthase in vitro, converting glyoxylate and acetyl-CoA to malate. Also displays malyl-CoA thioesterase activity. Also acts as a beta-methylmalate synthase in vitro, by mediating conversion of glyoxylate and propionyl-CoA to beta-methylmalate. Also has very weak citramalate synthase activity in vitro. This chain is Citramalyl-CoA lyase, mitochondrial, found in Mus musculus (Mouse).